The sequence spans 137 residues: Large ribosomal subunit protein eL32 (137 aa).

Residues 95–137 (PSAAEIATPVSSRKRIASSPARQADRCSRSRRSKFRPRRLRAS) form a disordered region. Positions 123 to 137 (RSRRSKFRPRRLRAS) are enriched in basic residues.

Belongs to the eukaryotic ribosomal protein eL32 family.

This chain is Large ribosomal subunit protein eL32 (rpl32), found in Trichoderma harzianum (Hypocrea lixii).